The chain runs to 228 residues: Putative lipoprotein LprH (228 aa).

Positions 1 to 27 (MACLGRPGCRGWAGASLVLVVVLALAA) are cleaved as a signal peptide. Cys28 carries the N-palmitoyl cysteine lipid modification. The S-diacylglycerol cysteine moiety is linked to residue Cys28. A helical transmembrane segment spans residues 191-211 (GLAVVPHAVLVLSACGFKPGF).

Its subcellular location is the cell membrane. The protein is Putative lipoprotein LprH (lprH) of Mycobacterium bovis (strain ATCC BAA-935 / AF2122/97).